The chain runs to 369 residues: Transmembrane protein 198 (369 aa).

Transmembrane regions (helical) follow at residues 37-57, 60-80, 93-113, 117-137, 148-168, 181-201, and 216-236; these read VVPS…CFFG, CFKA…IFLL, VEAS…VTML, VGLF…TLIG, SVWV…VLTL, VFGA…FALV, and VCWT…LGVL. A disordered region spans residues 266–308; that stretch reads RQKEERRESSRKKKRKQPQSAQHTHAAKALHPEPAYRRKPNPI.

Belongs to the TMEM198 family.

It localises to the membrane. The polypeptide is Transmembrane protein 198 (tmem198ab) (Danio rerio (Zebrafish)).